Reading from the N-terminus, the 458-residue chain is UDP-N-acetylmuramate--L-alanine ligase (458 aa).

115–121 (GSHGKTT) contributes to the ATP binding site.

The protein belongs to the MurCDEF family.

It localises to the cytoplasm. It carries out the reaction UDP-N-acetyl-alpha-D-muramate + L-alanine + ATP = UDP-N-acetyl-alpha-D-muramoyl-L-alanine + ADP + phosphate + H(+). Its pathway is cell wall biogenesis; peptidoglycan biosynthesis. Its function is as follows. Cell wall formation. The protein is UDP-N-acetylmuramate--L-alanine ligase of Anaeromyxobacter dehalogenans (strain 2CP-1 / ATCC BAA-258).